The primary structure comprises 468 residues: UDP-N-acetylmuramate--L-alanine ligase (468 aa).

118 to 124 (GTHGKTT) serves as a coordination point for ATP.

Belongs to the MurCDEF family.

The protein localises to the cytoplasm. It catalyses the reaction UDP-N-acetyl-alpha-D-muramate + L-alanine + ATP = UDP-N-acetyl-alpha-D-muramoyl-L-alanine + ADP + phosphate + H(+). It participates in cell wall biogenesis; peptidoglycan biosynthesis. Cell wall formation. This is UDP-N-acetylmuramate--L-alanine ligase from Roseobacter denitrificans (strain ATCC 33942 / OCh 114) (Erythrobacter sp. (strain OCh 114)).